A 740-amino-acid chain; its full sequence is Glycerol dehydrogenase large subunit (740 aa).

An N-terminal signal peptide occupies residues 1-29 (MRRPYLLATAAGLALACSPLIAHAQFAPA). Disordered stretches follow at residues 28–105 (PAGA…GDWV) and 442–468 (LPVE…PWSV). Low complexity predominate over residues 34 to 43 (EPSSSVPGPG). The span at 46 to 58 (SEPTENSPKSQSY) shows a compositional bias: polar residues.

The protein belongs to the bacterial PQQ dehydrogenase family. Pyrroloquinoline quinone serves as cofactor.

It is found in the secreted. The enzyme catalyses glycerol + A = dihydroxyacetone + AH2. Catalyzes the oxidation of glycerol to glycerone. Also acts, more slowly, on a number of other polyols including D-sorbitol, D-arabinitol, D-mannitol, meso-erythritol, adonitol and propylene glycol. The polypeptide is Glycerol dehydrogenase large subunit (sldA) (Gluconobacter thailandicus).